The following is an 81-amino-acid chain: Photosystem I iron-sulfur center (81 aa).

4Fe-4S ferredoxin-type domains lie at 2 to 31 and 39 to 68; these read SHSV…MIPW and IASA…VRVY. [4Fe-4S] cluster is bound by residues Cys11, Cys14, Cys17, Cys21, Cys48, Cys51, Cys54, and Cys58.

The eukaryotic PSI reaction center is composed of at least 11 subunits. [4Fe-4S] cluster serves as cofactor.

The protein resides in the plastid. It is found in the chloroplast thylakoid membrane. It carries out the reaction reduced [plastocyanin] + hnu + oxidized [2Fe-2S]-[ferredoxin] = oxidized [plastocyanin] + reduced [2Fe-2S]-[ferredoxin]. In terms of biological role, apoprotein for the two 4Fe-4S centers FA and FB of photosystem I (PSI); essential for photochemical activity. FB is the terminal electron acceptor of PSI, donating electrons to ferredoxin. The C-terminus interacts with PsaA/B/D and helps assemble the protein into the PSI complex. Required for binding of PsaD and PsaE to PSI. PSI is a plastocyanin-ferredoxin oxidoreductase, converting photonic excitation into a charge separation, which transfers an electron from the donor P700 chlorophyll pair to the spectroscopically characterized acceptors A0, A1, FX, FA and FB in turn. The chain is Photosystem I iron-sulfur center from Sorghum bicolor (Sorghum).